The chain runs to 547 residues: Inositol-tetrakisphosphate 1-kinase 6 (547 aa).

1D-myo-inositol 1,3,4-trisphosphate is bound at residue Lys263. ATP contacts are provided by Arg317 and Lys370. An ATP-grasp domain is found at 327–539 (LEGLSAEGRP…FWDAIKQSYE (213 aa)). Residues His381 and Lys415 each contribute to the 1D-myo-inositol 1,3,4-trisphosphate site. Residues 404–415 (QEYIDHGSKIFK), Ser430, and Ser450 each bind ATP. The Mg(2+) site is built by Asp497, Asp511, and Asn513. Positions 513 and 517 each coordinate 1D-myo-inositol 1,3,4-trisphosphate.

It belongs to the ITPK1 family. In terms of assembly, monomer. Mg(2+) is required as a cofactor.

It carries out the reaction 1D-myo-inositol 3,4,5,6-tetrakisphosphate + ATP = 1D-myo-inositol 1,3,4,5,6-pentakisphosphate + ADP + H(+). The catalysed reaction is 1D-myo-inositol 1,3,4-trisphosphate + ATP = 1D-myo-inositol 1,3,4,5-tetrakisphosphate + ADP + H(+). The enzyme catalyses 1D-myo-inositol 1,3,4-trisphosphate + ATP = 1D-myo-inositol 1,3,4,6-tetrakisphosphate + ADP + H(+). Functionally, kinase that can phosphorylate various inositol polyphosphate such as Ins(3,4,5,6)P4 or Ins(1,3,4)P3 and participates in phytic acid biosynthesis in developing seeds. Phytic acid is the primary storage form of phosphorus in cereal grains and other plant seeds. This Oryza sativa subsp. indica (Rice) protein is Inositol-tetrakisphosphate 1-kinase 6.